The chain runs to 478 residues: Glycogen synthase (478 aa).

An ADP-alpha-D-glucose-binding site is contributed by Lys-20.

Belongs to the glycosyltransferase 1 family. Bacterial/plant glycogen synthase subfamily.

The enzyme catalyses [(1-&gt;4)-alpha-D-glucosyl](n) + ADP-alpha-D-glucose = [(1-&gt;4)-alpha-D-glucosyl](n+1) + ADP + H(+). It functions in the pathway glycan biosynthesis; glycogen biosynthesis. Its function is as follows. Synthesizes alpha-1,4-glucan chains using ADP-glucose. The protein is Glycogen synthase of Cereibacter sphaeroides (strain ATCC 17025 / ATH 2.4.3) (Rhodobacter sphaeroides).